Here is a 246-residue protein sequence, read N- to C-terminus: Orotidine 5'-phosphate decarboxylase (246 aa).

Substrate contacts are provided by residues D22, K44, 71–80 (DLKYHDIPHT), T130, R191, Q201, G221, and R222. K73 (proton donor) is an active-site residue.

Belongs to the OMP decarboxylase family. Type 1 subfamily. As to quaternary structure, homodimer.

The catalysed reaction is orotidine 5'-phosphate + H(+) = UMP + CO2. It participates in pyrimidine metabolism; UMP biosynthesis via de novo pathway; UMP from orotate: step 2/2. Catalyzes the decarboxylation of orotidine 5'-monophosphate (OMP) to uridine 5'-monophosphate (UMP). The polypeptide is Orotidine 5'-phosphate decarboxylase (Neisseria meningitidis serogroup A / serotype 4A (strain DSM 15465 / Z2491)).